The primary structure comprises 181 residues: Large ribosomal subunit protein uL6m (181 aa).

The protein belongs to the universal ribosomal protein uL6 family.

The protein localises to the mitochondrion. The sequence is that of Large ribosomal subunit protein uL6m (RPL6) from Acanthamoeba castellanii (Amoeba).